A 370-amino-acid polypeptide reads, in one-letter code: 3-dehydroquinate synthase (370 aa).

NAD(+) is bound by residues 112-116, 136-137, lysine 149, lysine 158, and 176-179; these read GVIGD, TT, and TLAT. Zn(2+)-binding residues include glutamate 191, histidine 254, and histidine 276.

The protein belongs to the sugar phosphate cyclases superfamily. Dehydroquinate synthase family. Co(2+) serves as cofactor. Zn(2+) is required as a cofactor. Requires NAD(+) as cofactor.

Its subcellular location is the cytoplasm. The catalysed reaction is 7-phospho-2-dehydro-3-deoxy-D-arabino-heptonate = 3-dehydroquinate + phosphate. The protein operates within metabolic intermediate biosynthesis; chorismate biosynthesis; chorismate from D-erythrose 4-phosphate and phosphoenolpyruvate: step 2/7. Functionally, catalyzes the conversion of 3-deoxy-D-arabino-heptulosonate 7-phosphate (DAHP) to dehydroquinate (DHQ). In Xylella fastidiosa (strain M23), this protein is 3-dehydroquinate synthase.